Consider the following 90-residue polypeptide: Serine protease inhibitor Cvsi-1 (90 aa).

The first 19 residues, 1–19 (MDVVRTLILCVCLFGLTFA), serve as a signal peptide directing secretion.

Post-translationally, contains 6 disulfide bonds. As to expression, detected in hemolymph (at protein level). In oysters collected in the summer the expression level is highest in the digestive gland with low levels of expression in gill, mantle, labial palp, style-sac midgut, gonad, heart, and hemocyte. In winter expression levels are higher in all tissues with highest expression levels observed in the digestive gland. Within the digestive gland expression is limited to the basophil cells of the digestive diverticula.

It is found in the secreted. Its function is as follows. Slow-binding inhibitor of serine proteases. The inhibitor rapidly binds to the protease forming a weak enzyme-inhibitor complex, and this is followed by a slow isomerization forming a tight-binding enzyme-inhibitor complex. Active against subtilisin A, perkinsin and trypsin with dissociation constants of 0.29 nM, 13.7 nM and 17.7 nM respectively. Not active against thermolysin, papain or pepsin. Has antiparasitic activity against the protozoan P.marinus. This chain is Serine protease inhibitor Cvsi-1, found in Crassostrea virginica (Eastern oyster).